A 265-amino-acid chain; its full sequence is tRNA pseudouridine synthase A (265 aa).

The Nucleophile role is filled by Asp52. Residue Tyr110 participates in substrate binding. Residues 244 to 265 (FYRDGPPARTPGGTTDAEEDEG) are disordered.

This sequence belongs to the tRNA pseudouridine synthase TruA family. Homodimer.

The catalysed reaction is uridine(38/39/40) in tRNA = pseudouridine(38/39/40) in tRNA. In terms of biological role, formation of pseudouridine at positions 38, 39 and 40 in the anticodon stem and loop of transfer RNAs. The protein is tRNA pseudouridine synthase A of Myxococcus xanthus.